The following is a 467-amino-acid chain: UDP-N-acetylmuramate--L-alanine ligase (467 aa).

ATP is bound at residue 114 to 120; the sequence is GTHGKTT.

It belongs to the MurCDEF family.

The protein resides in the cytoplasm. The enzyme catalyses UDP-N-acetyl-alpha-D-muramate + L-alanine + ATP = UDP-N-acetyl-alpha-D-muramoyl-L-alanine + ADP + phosphate + H(+). The protein operates within cell wall biogenesis; peptidoglycan biosynthesis. Cell wall formation. This is UDP-N-acetylmuramate--L-alanine ligase from Rhodopseudomonas palustris (strain ATCC BAA-98 / CGA009).